A 237-amino-acid chain; its full sequence is Probable F-box protein At1g53815 (237 aa).

In terms of domain architecture, F-box spans 41–72; that stretch reads ISNILSRLPLKSKAKCRCVSKLWSSIIRRPNY.

The protein is Probable F-box protein At1g53815 of Arabidopsis thaliana (Mouse-ear cress).